A 595-amino-acid polypeptide reads, in one-letter code: Isoprene synthase, chloroplastic (595 aa).

The N-terminal 37 residues, 1–37 (MATELLCLHRPISLTHKLFRNPLPKVIQATPLTLKLR), are a transit peptide targeting the chloroplast. D345 provides a ligand contact to dimethylallyl diphosphate. Mg(2+)-binding residues include D345 and D349. A DDXXD motif motif is present at residues 345-349 (DDIYD). Positions 423, 486, and 489 each coordinate dimethylallyl diphosphate. Mg(2+) is bound by residues N489, S493, and E497.

It belongs to the terpene synthase family. Tpsb subfamily. It depends on Mg(2+) as a cofactor. Mn(2+) serves as cofactor.

The protein localises to the plastid. It is found in the chloroplast. The catalysed reaction is dimethylallyl diphosphate = isoprene + diphosphate. Functionally, lyase that catalyzes the formation of isoprene from dimethylallyl diphosphate. This is Isoprene synthase, chloroplastic (ISPS) from Populus tremuloides (Quaking aspen).